Here is a 377-residue protein sequence, read N- to C-terminus: MRYPVSTGIAAPAWFAFFCAWAGLWTFSLPVQAERIKDLASIQGIRPNQLIGYGLVVGLDGTGDQTVQTPFTIQSLNNMLMQLGINVPPGTNMRLRNVAAVMVTAALPPLAQPGQAIDVTVSSMGNARSLRGGTLLMTPLKGIDGQVYGVAQGNLLVGGIGAAASGSKVQVNHLNAGRIPGGATVERAVPVALGQNDMIRLELNTIDFSTAKRIVDAVNTRFGMGTAAALDGRAIQVRTPPESDQRVAFLAEMESLAINPAQMPARVIVNSRTGSVVMNQAATVDQCAIAHGNLTVVISTEPVISQPGPFSSGRTVQAQRSTIEIKQESGMLTMVEGASLAEVVKALNAIGATPQDLLAILQAMKSAGALRAELEII.

The first 33 residues, 1–33 (MRYPVSTGIAAPAWFAFFCAWAGLWTFSLPVQA), serve as a signal peptide directing secretion.

It belongs to the FlgI family. As to quaternary structure, the basal body constitutes a major portion of the flagellar organelle and consists of four rings (L,P,S, and M) mounted on a central rod.

Its subcellular location is the periplasm. The protein resides in the bacterial flagellum basal body. Functionally, assembles around the rod to form the L-ring and probably protects the motor/basal body from shearing forces during rotation. This is Flagellar P-ring protein from Nitrosospira multiformis (strain ATCC 25196 / NCIMB 11849 / C 71).